Reading from the N-terminus, the 812-residue chain is Valine--tRNA ligase (812 aa).

Positions 46-56 (PTVSGQLHIGH) match the 'HIGH' region motif. The 'KMSKS' region signature appears at 536-540 (KMSKS). Lys539 is a binding site for ATP.

The protein belongs to the class-I aminoacyl-tRNA synthetase family. ValS type 2 subfamily. Monomer.

The protein resides in the cytoplasm. The catalysed reaction is tRNA(Val) + L-valine + ATP = L-valyl-tRNA(Val) + AMP + diphosphate. In terms of biological role, catalyzes the attachment of valine to tRNA(Val). As ValRS can inadvertently accommodate and process structurally similar amino acids such as threonine, to avoid such errors, it has a 'posttransfer' editing activity that hydrolyzes mischarged Thr-tRNA(Val) in a tRNA-dependent manner. The polypeptide is Valine--tRNA ligase (Rickettsia bellii (strain OSU 85-389)).